The following is a 147-amino-acid chain: Hemoglobin subunit gamma-1 (147 aa).

G2 carries the post-translational modification N-acetylglycine. The region spanning 3-147 (HFTEEDKATI…VASALSSRYH (145 aa)) is the Globin domain. T13 carries the post-translational modification Phosphothreonine. 3 positions are modified to phosphoserine: S45, S51, and S53. An N6-acetyllysine modification is found at K60. H64 is a heme b binding site. K83 is subject to N6-acetyllysine. Position 93 (H93) interacts with heme b. C94 is subject to S-nitrosocysteine. S140 carries the phosphoserine modification.

The protein belongs to the globin family. In terms of assembly, heterotetramer of two alpha chains and two gamma chains in fetal hemoglobin (Hb F). In terms of tissue distribution, red blood cells.

Its function is as follows. Gamma chains make up the fetal hemoglobin F, in combination with alpha chains. The polypeptide is Hemoglobin subunit gamma-1 (HBG1) (Gorilla gorilla gorilla (Western lowland gorilla)).